The chain runs to 835 residues: Protein bicaudal D homolog 1 (835 aa).

Residues 1–264 are a coiled coil; that stretch reads MAAEEALKTV…YINLSDSHIS (264 aa). Residues 278–297 are disordered; that stretch reads EPNNDDKMNGHIHGPLGKLN. Positions 320-519 form a coiled coil; sequence ELNISEIQKL…TFSEELAQLY (200 aa). 2 disordered regions span residues 545–616 and 800–835; these read RSGS…LDTS and DHEQSRRSKGKLGKSKIGSPKIVSSLLPPYRHSAHN. Residues 557 to 572 are compositionally biased toward low complexity; the sequence is GLLSPRLSRRGVSSPV. Residues 581–590 are compositionally biased toward basic and acidic residues; sequence VSKENTETSK. The segment covering 591–604 has biased composition (low complexity); it reads EPSPTKTPTISPVI. A coiled-coil region spans residues 663–803; that stretch reads IDKDKEALME…LEDLEFDHEQ (141 aa). Residues 663–803 are interaction with RAB6A; sequence IDKDKEALME…LEDLEFDHEQ (141 aa).

Belongs to the BicD family. In terms of assembly, interacts with RAB6A. Interacts (via C-terminus) with RAB6B (GTP-bound); the interaction is direct. Interacts with CLIP-115 and KIFC2. Expressed in the brain, heart and skeletal muscle.

It is found in the golgi apparatus. Regulates coat complex coatomer protein I (COPI)-independent Golgi-endoplasmic reticulum transport by recruiting the dynein-dynactin motor complex. The polypeptide is Protein bicaudal D homolog 1 (Bicd1) (Mus musculus (Mouse)).